The following is a 147-amino-acid chain: Angiogenin (147 aa).

The signal sequence occupies residues 1-24 (MVMGLGVLLLVFVLGLGLTPPTLA). The residue at position 25 (Gln-25) is a Pyrrolidone carboxylic acid. His-37 (proton acceptor) is an active-site residue. Positions 45 and 46 each coordinate tRNA. Disulfide bonds link Cys-50–Cys-105, Cys-63–Cys-116, and Cys-81–Cys-131. The Nucleolar localization signal motif lies at 55–59 (RRRGL). The tRNA site is built by Cys-105 and Val-127. His-138 serves as the catalytic Proton donor.

The protein belongs to the pancreatic ribonuclease family. In terms of assembly, homodimer. Interacts with RNH1; inhibiting ANG ribonuclease activity. Interacts with PCNA.

The protein resides in the secreted. It is found in the nucleus. It localises to the nucleolus. The protein localises to the cytoplasm. Its subcellular location is the stress granule. With respect to regulation, has weak tRNA ribonuclease activity by itself due to partial autoinhibition by its C-terminus, which folds into a short alpha-helix that partially occludes the substrate-binding site. In absence of stress, the ribonuclease activity is inhibited by RNH1 in the cytoplasm. In response to stress, dissociates from RNH1 in the cytoplasm and associates with cytoplasmic ribosomes with vacant A-sites: ribosomes directly activate the tRNA ribonuclease activity of ANG by refolding the C-terminal alpha-helix. In response to stress, the angiogenic activity of ANG is inhibited by RNH1 in the nucleus. In terms of biological role, secreted ribonuclease that can either promote or restrict cell proliferation of target cells, depending on the context. Endocytosed in target cells via its receptor PLXNB2 and translocates to the cytoplasm or nucleus. Under stress conditions, localizes to the cytoplasm and promotes the assembly of stress granules (SGs): specifically cleaves a subset of tRNAs within anticodon loops to produce tRNA-derived stress-induced fragments (tiRNAs), resulting in translation repression and inhibition of cell proliferation. tiRNas also prevent formation of apoptosome, thereby promoting cell survival. Preferentially cleaves RNAs between a pyrimidine and an adenosine residue, suggesting that it cleaves the anticodon loop of tRNA(Ala) (32-UUAGCAU-38) after positions 33 and 36. Cleaves a subset of tRNAs, including tRNA(Ala), tRNA(Glu), tRNA(Gly), tRNA(Lys), tRNA(Val), tRNA(His), tRNA(Asp) and tRNA(Sec). Under growth conditions and in differentiated cells, translocates to the nucleus and stimulates ribosomal RNA (rRNA) transcription, including that containing the initiation site sequences of 45S rRNA, thereby promoting cell growth and proliferation. Angiogenin induces vascularization of normal and malignant tissues via its ability to promote rRNA transcription. Involved in hematopoietic stem and progenitor cell (HSPC) growth and survival by promoting rRNA transcription in growth conditions and inhibiting translation in response to stress, respectively. Mediates the crosstalk between myeloid and intestinal epithelial cells to protect the intestinal epithelial barrier integrity: secreted by myeloid cells and promotes intestinal epithelial cells proliferation and survival. Also mediates osteoclast-endothelial cell crosstalk in growing bone: produced by osteoclasts and protects the neighboring vascular cells against senescence by promoting rRNA transcription. In Pan troglodytes (Chimpanzee), this protein is Angiogenin (ANG).